Here is a 207-residue protein sequence, read N- to C-terminus: Large ribosomal subunit protein bL25 (207 aa).

Residues 1 to 20 (MANHQIKAQRRKDEGKGASR) are disordered.

Belongs to the bacterial ribosomal protein bL25 family. CTC subfamily. Part of the 50S ribosomal subunit; part of the 5S rRNA/L5/L18/L25 subcomplex. Contacts the 5S rRNA. Binds to the 5S rRNA independently of L5 and L18.

In terms of biological role, this is one of the proteins that binds to the 5S RNA in the ribosome where it forms part of the central protuberance. The polypeptide is Large ribosomal subunit protein bL25 (Xylella fastidiosa (strain M12)).